The chain runs to 456 residues: Senecionine N-oxygenase (456 aa).

A signal peptide spans 1–22 (MFRKFVIMLVLSLLVAAGISQA). 32-37 (GAGYSG) is an FAD binding site. Position 215-220 (215-220 (GAGPSG)) interacts with NADP(+).

This sequence belongs to the FMO family. In terms of assembly, homotetramer. FAD is required as a cofactor. As to expression, hemolymph.

The protein resides in the secreted. The catalysed reaction is senecionine + NADPH + O2 = senecionine N-oxide + NADP(+) + H2O. NADPH-dependent monooxygenase that detoxifies senecionine and similar plant alkaloids that are ingested by the larvae. Is active towards a narrow range of related substrates with highest activity towards senecionine, followed by seneciphylline, retrorsine, monocrotaline, senecivernine, axillarine and axillaridine. The protein is Senecionine N-oxygenase (sno1) of Tyria jacobaeae (Cinnabar moth).